The following is a 736-amino-acid chain: Orphan sodium- and chloride-dependent neurotransmitter transporter NTT5 (736 aa).

At 1-138 (MKTEAQPSTS…FAYLWLNSGG (138 aa)) the chain is on the cytoplasmic side. A run of 3 helical transmembrane segments spans residues 139–159 (CSFAAIYIFMLFLVGVPLLFL), 177–197 (IIAPWIGGVGYSSFMVCFILG), and 199–219 (YFNVVNSWIIFYMSQSFQFPV). Residues 220–263 (PWEKCPLTMNSSGFDPECERTTPSIYFWYQQALKASDRIEDGGS) are Extracellular-facing. N-linked (GlcNAc...) asparagine glycosylation is present at N229. Transmembrane regions (helical) follow at residues 264–284 (PVYSLVLPFFLCWCLVGAFMI), 290–310 (TGKVIYVLVLLPCFIIVGFFI), 338–358 (VWSLAGGQVLSNTGIGLGSVA), and 383–403 (LTLLVFTSFNFCVLGFWATVI). Residues 404 to 495 (THRCCERNAE…EAMSFLPPSV (92 aa)) are Extracellular-facing. Transmembrane regions (helical) follow at residues 496–516 (FWSFIFFLMLLAMGLSSAIGI), 534–554 (HTKLLIVGVFLLMFVCGLFFT), 568–588 (YWIVFPIIVVVVFETMAVSWA), 609–629 (IFGWLWPHLCPVVLLIIFVTM), and 659–679 (ALLLMITLFAIVILPIPAYFV). Residues 680-736 (YCRIHRIPFRPKSGDGPMTASTSLPLSHQLTPSKEVQKEEILQVDETKYPSTCNVTS) lie on the Cytoplasmic side of the membrane.

It belongs to the sodium:neurotransmitter symporter (SNF) (TC 2.A.22) family. SLC6A16 subfamily. Highly expressed in peripheral tissues, particularly in testis, pancreas, and prostate.

Its subcellular location is the membrane. The sequence is that of Orphan sodium- and chloride-dependent neurotransmitter transporter NTT5 (SLC6A16) from Homo sapiens (Human).